The primary structure comprises 261 residues: Carbonic anhydrase 1 (261 aa).

A2 is modified (N-acetylalanine). Residues 4–261 (ADWGYGSENG…LKGRTVRASF (258 aa)) form the Alpha-carbonic anhydrase domain. The active-site Proton donor/acceptor is the H65. H95, H97, and H120 together coordinate Zn(2+). Substrate-binding positions include T200 and 200 to 201 (TH). Residues 239-261 (AVPVLSNHRPPQPLKGRTVRASF) are disordered.

The protein belongs to the alpha-carbonic anhydrase family. Zn(2+) serves as cofactor.

Its subcellular location is the cytoplasm. It catalyses the reaction hydrogencarbonate + H(+) = CO2 + H2O. It carries out the reaction urea = cyanamide + H2O. With respect to regulation, inhibited by acetazolamide. Catalyzes the reversible hydration of carbon dioxide. Can hydrate cyanamide to urea. The polypeptide is Carbonic anhydrase 1 (Ca1) (Mus musculus (Mouse)).